The chain runs to 423 residues: D-tagatose-1,6-bisphosphate aldolase subunit GatZ (423 aa).

Belongs to the GatZ/KbaZ family. GatZ subfamily. Forms a complex with GatY.

It functions in the pathway carbohydrate metabolism; D-tagatose 6-phosphate degradation; D-glyceraldehyde 3-phosphate and glycerone phosphate from D-tagatose 6-phosphate: step 2/2. Component of the tagatose-1,6-bisphosphate aldolase GatYZ that is required for full activity and stability of the Y subunit. Could have a chaperone-like function for the proper and stable folding of GatY. When expressed alone, GatZ does not show any aldolase activity. Is involved in the catabolism of galactitol. The polypeptide is D-tagatose-1,6-bisphosphate aldolase subunit GatZ (Salmonella paratyphi B (strain ATCC BAA-1250 / SPB7)).